Reading from the N-terminus, the 235-residue chain is LIKEIKAAVTIPVMAKARIGHFVEAQILESIGVDYVDESEVLTPADEDHHINKHNFQIPFVCGLSIPRGAPPPAYRRGYAGHDTGPRVRKPSTGNVVEAVRHIRSVMGEIRLLRNMDDDEVFAYAKKISAAYDLVMQTKQLGRLPVVNFAAGGVATPADAALMMQLGCDGVFVGSGVFKSGDPAKRARAIVQAVTHYSDPDLLGRGEFGLGEAMVGIIVRMRRLRGTPIVLNEVI.

The Schiff-base intermediate with D-ribose 5-phosphate role is filled by Lys16. Arg104 contributes to the D-glyceraldehyde 3-phosphate binding site. Residues Gly153 and 174 to 175 (GS) each bind D-ribose 5-phosphate.

This sequence belongs to the PdxS/SNZ family.

The catalysed reaction is aldehydo-D-ribose 5-phosphate + D-glyceraldehyde 3-phosphate + L-glutamine = pyridoxal 5'-phosphate + L-glutamate + phosphate + 3 H2O + H(+). The protein operates within cofactor biosynthesis; pyridoxal 5'-phosphate biosynthesis. In terms of biological role, catalyzes the formation of pyridoxal 5'-phosphate from ribose 5-phosphate (RBP), glyceraldehyde 3-phosphate (G3P) and ammonia. The ammonia is provided by PDX2. Can also use ribulose 5-phosphate and dihydroxyacetone phosphate as substrates, resulting from enzyme-catalyzed isomerization of RBP and G3P, respectively. Also plays an indirect role in resistance to singlet oxygen-generating photosensitizers. The chain is Probable pyridoxal 5'-phosphate synthase subunit PDX1 from Stellaria longipes (Longstalk starwort).